The primary structure comprises 128 residues: MTKEELIQAIKEMTVAELAELVKALEEEFGVSASAPVAVAAMPGAAGGQAAQEEEKTEFNVVLKSFGDKKIAVIKAVRAITGLGLKEAKELVEKAGSPDAIIKEGISKSEAEEIKKQLEEAGAEVELK.

It belongs to the bacterial ribosomal protein bL12 family. Homodimer. Part of the ribosomal stalk of the 50S ribosomal subunit. Forms a multimeric L10(L12)X complex, where L10 forms an elongated spine to which 2 to 4 L12 dimers bind in a sequential fashion. Binds GTP-bound translation factors.

Functionally, forms part of the ribosomal stalk which helps the ribosome interact with GTP-bound translation factors. Is thus essential for accurate translation. This Kosmotoga olearia (strain ATCC BAA-1733 / DSM 21960 / TBF 19.5.1) protein is Large ribosomal subunit protein bL12.